The sequence spans 329 residues: GTP 3',8-cyclase (329 aa).

Residues 8–234 (AFARKFYYLR…QLRQRSDGPA (227 aa)) form the Radical SAM core domain. Arg-17 contributes to the GTP binding site. Positions 24 and 28 each coordinate [4Fe-4S] cluster. Residue Tyr-30 coordinates S-adenosyl-L-methionine. Cys-31 contacts [4Fe-4S] cluster. Residue Arg-68 participates in GTP binding. Residue Gly-72 participates in S-adenosyl-L-methionine binding. A GTP-binding site is contributed by Thr-99. Ser-123 serves as a coordination point for S-adenosyl-L-methionine. Lys-160 is a GTP binding site. S-adenosyl-L-methionine is bound at residue Met-194. 2 residues coordinate [4Fe-4S] cluster: Cys-257 and Cys-260. A GTP-binding site is contributed by 262–264 (RLR). Cys-274 contacts [4Fe-4S] cluster.

This sequence belongs to the radical SAM superfamily. MoaA family. As to quaternary structure, monomer and homodimer. Requires [4Fe-4S] cluster as cofactor.

The enzyme catalyses GTP + AH2 + S-adenosyl-L-methionine = (8S)-3',8-cyclo-7,8-dihydroguanosine 5'-triphosphate + 5'-deoxyadenosine + L-methionine + A + H(+). The protein operates within cofactor biosynthesis; molybdopterin biosynthesis. Catalyzes the cyclization of GTP to (8S)-3',8-cyclo-7,8-dihydroguanosine 5'-triphosphate. In Escherichia coli O139:H28 (strain E24377A / ETEC), this protein is GTP 3',8-cyclase.